The chain runs to 310 residues: Apolipoprotein E (310 aa).

The first 18 residues, 1 to 18 (MKVLWPALVVTLLAGCRA), serve as a signal peptide directing secretion. A run of 8 repeats spans residues 77–98 (ALMD…EQLG), 99–120 (PVAE…ARLG), 121–142 (ADME…AMVG), 143–164 (QSTE…KRLL), 165–186 (RDAE…EGAE), 187–208 (RSVN…TMHT), 209–226 (LVSK…QRLR), and 227–248 (GRLE…EQVQ). The segment at 77–248 (ALMDDTMKEV…RLDEVREQVQ (172 aa)) is 8 X 22 AA approximate tandem repeats. The segment at 155–165 (HLRKLRKRLLR) is LDL and other lipoprotein receptors binding. 159-162 (LRKR) contributes to the heparin binding site. The segment at 207-283 (HTLVSKPLQE…SWFEPLVQDM (77 aa)) is lipid-binding and lipoprotein association. 222–229 (AQRLRGRL) lines the heparin pocket. The segment at 259–310 (NQVRLQAEAFQGRLKSWFEPLVQDMQQKWAELVEKVQLALRAVPTSVPSEKQ) is homooligomerization. Residues 271-283 (RLKSWFEPLVQDM) form a specificity for association with VLDL region.

This sequence belongs to the apolipoprotein A1/A4/E family. As to quaternary structure, homotetramer. May interact with ABCA1; functionally associated with ABCA1 in the biogenesis of HDLs. May interact with APP/A4 amyloid-beta peptide; the interaction is extremely stable in vitro but its physiological significance is unclear. May interact with MAPT. May interact with MAP2. In the cerebrospinal fluid, interacts with secreted SORL1. Interacts with PMEL; this allows the loading of PMEL luminal fragment on ILVs to induce fibril nucleation. APOE exists as multiple glycosylated and sialylated glycoforms within cells and in plasma. The extent of glycosylation and sialylation are tissue and context specific. Post-translationally, glycated in plasma VLDL. In terms of processing, phosphorylated by FAM20C in the extracellular medium.

Its subcellular location is the secreted. The protein resides in the extracellular space. The protein localises to the extracellular matrix. It is found in the extracellular vesicle. It localises to the endosome. Its subcellular location is the multivesicular body. APOE is an apolipoprotein, a protein associating with lipid particles, that mainly functions in lipoprotein-mediated lipid transport between organs via the plasma and interstitial fluids. APOE is a core component of plasma lipoproteins and is involved in their production, conversion and clearance. Apolipoproteins are amphipathic molecules that interact both with lipids of the lipoprotein particle core and the aqueous environment of the plasma. As such, APOE associates with chylomicrons, chylomicron remnants, very low density lipoproteins (VLDL) and intermediate density lipoproteins (IDL) but shows a preferential binding to high-density lipoproteins (HDL). It also binds a wide range of cellular receptors including the LDL receptor/LDLR and the very low-density lipoprotein receptor/VLDLR that mediate the cellular uptake of the APOE-containing lipoprotein particles. Finally, APOE also has a heparin-binding activity and binds heparan-sulfate proteoglycans on the surface of cells, a property that supports the capture and the receptor-mediated uptake of APOE-containing lipoproteins by cells. This is Apolipoprotein E (APOE) from Dicerorhinus sumatrensis harrissoni (Bornean rhinoceros).